The primary structure comprises 244 residues: Large ribosomal subunit protein uL3 (244 aa).

The protein belongs to the universal ribosomal protein uL3 family. In terms of assembly, part of the 50S ribosomal subunit. Forms a cluster with proteins L14 and L19.

Functionally, one of the primary rRNA binding proteins, it binds directly near the 3'-end of the 23S rRNA, where it nucleates assembly of the 50S subunit. The sequence is that of Large ribosomal subunit protein uL3 from Aquifex pyrophilus.